The sequence spans 557 residues: Formate--tetrahydrofolate ligase (557 aa).

65-72 lines the ATP pocket; it reads TPAGEGKT.

Belongs to the formate--tetrahydrofolate ligase family.

It carries out the reaction (6S)-5,6,7,8-tetrahydrofolate + formate + ATP = (6R)-10-formyltetrahydrofolate + ADP + phosphate. It functions in the pathway one-carbon metabolism; tetrahydrofolate interconversion. In Zymomonas mobilis subsp. mobilis (strain ATCC 31821 / ZM4 / CP4), this protein is Formate--tetrahydrofolate ligase.